A 524-amino-acid chain; its full sequence is Protopine 6-monooxygenase (524 aa).

The next 3 membrane-spanning stretches (helical) occupy residues L4–Y24, L232–Q252, and M319–M339. C462 is a binding site for heme.

Belongs to the cytochrome P450 family. The cofactor is heme.

It localises to the endoplasmic reticulum membrane. It catalyses the reaction protopine + reduced [NADPH--hemoprotein reductase] + O2 = 6-hydroxyprotopine + oxidized [NADPH--hemoprotein reductase] + H2O + H(+). It participates in alkaloid biosynthesis. Its function is as follows. Catalyzes the conversion of protopine and allocryptopine to dihydrosanguinarine and dihydrochelerythrine, respectively, in the biosynthesis of isoquinoline alkaloid sanguinarine. The protein is Protopine 6-monooxygenase (CYP82N2v2) of Eschscholzia californica (California poppy).